The following is a 339-amino-acid chain: Protein LicA (339 aa).

Tandem repeats lie at residues I4–S7, I8–S11, I12–S15, I16–S19, I20–S23, I24–S27, I28–S31, I32–S35, and I36–S39. The 9 X 4 AA tandem repeats of I-N-Q-S stretch occupies residues I4 to S39.

The protein belongs to the peptidase S49 family.

In terms of biological role, mediates phase variation of the LOS 6A2 and 12D9 epitopes. Phase variation of H.influenza LOS epitopes expressed by LicA is determined by a translational switch. This chain is Protein LicA (licA), found in Haemophilus influenzae.